Consider the following 543-residue polypeptide: CTP synthase (543 aa).

Residues 1–265 (MARYIFITGG…DDEVLAAFGI (265 aa)) are amidoligase domain. Serine 13 is a CTP binding site. Serine 13 contributes to the UTP binding site. An ATP-binding site is contributed by 14–19 (SLGKGL). L-glutamine is bound at residue tyrosine 54. Position 71 (aspartate 71) interacts with ATP. Mg(2+)-binding residues include aspartate 71 and glutamate 139. Residues 146-148 (DIE), 186-191 (KTKPTQ), and lysine 222 contribute to the CTP site. UTP contacts are provided by residues 186 to 191 (KTKPTQ) and lysine 222. 238–240 (RDV) serves as a coordination point for ATP. The region spanning 291-542 (TIAIVGKYTG…IQAAMVQSRL (252 aa)) is the Glutamine amidotransferase type-1 domain. An L-glutamine-binding site is contributed by glycine 353. Cysteine 380 serves as the catalytic Nucleophile; for glutamine hydrolysis. L-glutamine contacts are provided by residues 381–384 (FGMQ), glutamate 404, and arginine 470. Catalysis depends on residues histidine 515 and glutamate 517.

It belongs to the CTP synthase family. As to quaternary structure, homotetramer.

It catalyses the reaction UTP + L-glutamine + ATP + H2O = CTP + L-glutamate + ADP + phosphate + 2 H(+). The catalysed reaction is L-glutamine + H2O = L-glutamate + NH4(+). It carries out the reaction UTP + NH4(+) + ATP = CTP + ADP + phosphate + 2 H(+). It participates in pyrimidine metabolism; CTP biosynthesis via de novo pathway; CTP from UDP: step 2/2. With respect to regulation, allosterically activated by GTP, when glutamine is the substrate; GTP has no effect on the reaction when ammonia is the substrate. The allosteric effector GTP functions by stabilizing the protein conformation that binds the tetrahedral intermediate(s) formed during glutamine hydrolysis. Inhibited by the product CTP, via allosteric rather than competitive inhibition. Functionally, catalyzes the ATP-dependent amination of UTP to CTP with either L-glutamine or ammonia as the source of nitrogen. Regulates intracellular CTP levels through interactions with the four ribonucleotide triphosphates. The polypeptide is CTP synthase (Bradyrhizobium diazoefficiens (strain JCM 10833 / BCRC 13528 / IAM 13628 / NBRC 14792 / USDA 110)).